The sequence spans 354 residues: Tryptophan--tRNA ligase (354 aa).

ATP contacts are provided by residues 13 to 15 (QPT) and 21 to 22 (GN). The 'HIGH' region motif lies at 14–22 (PTGNLHLGN). L-tryptophan is bound at residue Asp137. ATP is bound by residues 149–151 (GDD), Val208, and 217–221 (KMSKS). The short motif at 217–221 (KMSKS) is the 'KMSKS' region element.

It belongs to the class-I aminoacyl-tRNA synthetase family. As to quaternary structure, homodimer.

The protein resides in the cytoplasm. It carries out the reaction tRNA(Trp) + L-tryptophan + ATP = L-tryptophyl-tRNA(Trp) + AMP + diphosphate + H(+). Functionally, catalyzes the attachment of tryptophan to tRNA(Trp). In Agrobacterium fabrum (strain C58 / ATCC 33970) (Agrobacterium tumefaciens (strain C58)), this protein is Tryptophan--tRNA ligase.